The chain runs to 309 residues: Protein MAK16 homolog (309 aa).

A disordered region spans residues 194–309; sequence EADQFSEEEA…IEEETENQAN (116 aa). 2 stretches are compositionally biased toward acidic residues: residues 195–227 and 235–270; these read ADQFSEEEADENEEEGEEEMEEEFEDDIDDIED and VEGDDDEDDIDDEYENEPYQDDDEEDDDDDDDDDEE. Basic residues predominate over residues 275 to 293; the sequence is ITKKRGPTFKPTKKTPQKR. Residues 299–309 are compositionally biased toward acidic residues; sequence EIEEETENQAN.

Belongs to the MAK16 family.

The protein localises to the nucleus. It localises to the nucleolus. This chain is Protein MAK16 homolog (mak16l), found in Dictyostelium discoideum (Social amoeba).